The primary structure comprises 337 residues: Lipopolysaccharide 1,3-galactosyltransferase (337 aa).

Residues 33–38 (GIDKNF) and 130–131 (DA) each bind UDP. Mg(2+)-binding residues include aspartate 130 and aspartate 132. 2 consecutive short sequence motifs (DXD) follow at residues 130-132 (DAD) and 219-221 (DQD). Histidine 264 lines the Mg(2+) pocket. UDP is bound at residue 264-270 (HYIGPTK).

Belongs to the glycosyltransferase 8 family. Mg(2+) is required as a cofactor.

It carries out the reaction UDP-alpha-D-galactose + [lipopolysaccharide] = UDP + 3-alpha-D-galactosyl-[lipopolysaccharide].. It participates in bacterial outer membrane biogenesis; LPS core biosynthesis. Its activity is regulated as follows. Inhibited in a competitive manner by closely related nonsubstrate lipopolysaccharides. In terms of biological role, galactosyltransferase involved in the biosynthesis of the core oligosaccharide region of lipopolysaccharide (LPS). Catalyzes the addition of an alpha l,3-linked galactose (galactose I) to the first outer-core glucose (glucose I). Cannot use UDP-glucose. Activity probably does not require the branched galactose added by WaaB, but it is higher in the presence of this branched galactose. This Salmonella typhimurium (strain LT2 / SGSC1412 / ATCC 700720) protein is Lipopolysaccharide 1,3-galactosyltransferase.